A 651-amino-acid polypeptide reads, in one-letter code: Acetyl-coenzyme A synthetase (651 aa).

CoA-binding positions include 189-192 (RGGK), T311, and N335. Residues 387–389 (GEP), 411–416 (DTWWQT), D500, and R515 contribute to the ATP site. S523 contributes to the CoA binding site. Residue R526 participates in ATP binding. Positions 537, 539, and 542 each coordinate Mg(2+). R584 is a CoA binding site. K609 carries the N6-acetyllysine modification.

Belongs to the ATP-dependent AMP-binding enzyme family. Mg(2+) serves as cofactor. Acetylated. Deacetylation by the SIR2-homolog deacetylase activates the enzyme.

The enzyme catalyses acetate + ATP + CoA = acetyl-CoA + AMP + diphosphate. Functionally, catalyzes the conversion of acetate into acetyl-CoA (AcCoA), an essential intermediate at the junction of anabolic and catabolic pathways. AcsA undergoes a two-step reaction. In the first half reaction, AcsA combines acetate with ATP to form acetyl-adenylate (AcAMP) intermediate. In the second half reaction, it can then transfer the acetyl group from AcAMP to the sulfhydryl group of CoA, forming the product AcCoA. In Rhizobium etli (strain CIAT 652), this protein is Acetyl-coenzyme A synthetase.